A 172-amino-acid polypeptide reads, in one-letter code: Transmembrane protein 91 (172 aa).

Disordered regions lie at residues 1-31 (MDSP…RHEL) and 55-83 (PSVS…DWDG). Residues 1–97 (MDSPSLRELQ…SPFLPHDHLG (97 aa)) lie on the Extracellular side of the membrane. Acidic residues predominate over residues 69–81 (VEDMSSSDSDSDW). Residues 98 to 118 (LAVFSMLCCFWPVGIAAFCLA) form a helical membrane-spanning segment. Over 119–139 (QKTNKAWAKGDIQGAGAASRR) the chain is Cytoplasmic. The helical transmembrane segment at 140-160 (AFLLGVLAVGLGVCTYAAALV) threads the bilayer. Residues 161 to 172 (TLAAYLASRDPP) are Extracellular-facing.

It belongs to the CD225/Dispanin family.

The protein localises to the membrane. In Homo sapiens (Human), this protein is Transmembrane protein 91 (TMEM91).